The primary structure comprises 254 residues: Adenosylcobinamide-GDP ribazoletransferase (254 aa).

The next 7 helical transmembrane spans lie at 27–47 (SSLY…VLFA), 50–70 (GMGA…GFIL), 104–124 (VGSF…ICLL), 131–151 (AYGM…LLAA), 170–190 (AGWP…FVLL), 194–214 (VVPS…VGWL), and 233–253 (LVEI…FSAI).

It belongs to the CobS family. Requires Mg(2+) as cofactor.

The protein localises to the cell inner membrane. The enzyme catalyses alpha-ribazole + adenosylcob(III)inamide-GDP = adenosylcob(III)alamin + GMP + H(+). The catalysed reaction is alpha-ribazole 5'-phosphate + adenosylcob(III)inamide-GDP = adenosylcob(III)alamin 5'-phosphate + GMP + H(+). The protein operates within cofactor biosynthesis; adenosylcobalamin biosynthesis; adenosylcobalamin from cob(II)yrinate a,c-diamide: step 7/7. Functionally, joins adenosylcobinamide-GDP and alpha-ribazole to generate adenosylcobalamin (Ado-cobalamin). Also synthesizes adenosylcobalamin 5'-phosphate from adenosylcobinamide-GDP and alpha-ribazole 5'-phosphate. The polypeptide is Adenosylcobinamide-GDP ribazoletransferase (Chlorobaculum parvum (strain DSM 263 / NCIMB 8327) (Chlorobium vibrioforme subsp. thiosulfatophilum)).